The sequence spans 380 residues: Queuine tRNA-ribosyltransferase (380 aa).

Asp-96 serves as the catalytic Proton acceptor. Substrate-binding positions include 96–100 (DSGGF), Asp-150, Gln-193, and Gly-220. Residues 251–257 (GVGAPDS) form an RNA binding region. The Nucleophile role is filled by Asp-270. The tract at residues 275-279 (TRIAR) is RNA binding; important for wobble base 34 recognition. The Zn(2+) site is built by Cys-308, Cys-310, Cys-313, and His-339.

It belongs to the queuine tRNA-ribosyltransferase family. Homodimer. Within each dimer, one monomer is responsible for RNA recognition and catalysis, while the other monomer binds to the replacement base PreQ1. The cofactor is Zn(2+).

It carries out the reaction 7-aminomethyl-7-carbaguanine + guanosine(34) in tRNA = 7-aminomethyl-7-carbaguanosine(34) in tRNA + guanine. Its pathway is tRNA modification; tRNA-queuosine biosynthesis. Its function is as follows. Catalyzes the base-exchange of a guanine (G) residue with the queuine precursor 7-aminomethyl-7-deazaguanine (PreQ1) at position 34 (anticodon wobble position) in tRNAs with GU(N) anticodons (tRNA-Asp, -Asn, -His and -Tyr). Catalysis occurs through a double-displacement mechanism. The nucleophile active site attacks the C1' of nucleotide 34 to detach the guanine base from the RNA, forming a covalent enzyme-RNA intermediate. The proton acceptor active site deprotonates the incoming PreQ1, allowing a nucleophilic attack on the C1' of the ribose to form the product. After dissociation, two additional enzymatic reactions on the tRNA convert PreQ1 to queuine (Q), resulting in the hypermodified nucleoside queuosine (7-(((4,5-cis-dihydroxy-2-cyclopenten-1-yl)amino)methyl)-7-deazaguanosine). This chain is Queuine tRNA-ribosyltransferase, found in Streptococcus thermophilus (strain ATCC BAA-250 / LMG 18311).